The chain runs to 408 residues: Argininosuccinate synthase (408 aa).

ATP is bound by residues 10–18 (AYSGGLDTS) and Ala37. The L-citrulline site is built by Tyr90 and Ser95. Gly120 contacts ATP. L-aspartate is bound by residues Thr122, Asn126, and Asp127. An L-citrulline-binding site is contributed by Asn126. Arg130, Ser181, Ser190, Glu266, and Tyr278 together coordinate L-citrulline.

The protein belongs to the argininosuccinate synthase family. Type 1 subfamily. In terms of assembly, homotetramer.

It localises to the cytoplasm. It catalyses the reaction L-citrulline + L-aspartate + ATP = 2-(N(omega)-L-arginino)succinate + AMP + diphosphate + H(+). It participates in amino-acid biosynthesis; L-arginine biosynthesis; L-arginine from L-ornithine and carbamoyl phosphate: step 2/3. The sequence is that of Argininosuccinate synthase from Laribacter hongkongensis (strain HLHK9).